The primary structure comprises 229 residues: Cytidylate kinase (229 aa).

12–20 lines the ATP pocket; it reads GPSGAGKGT.

The protein belongs to the cytidylate kinase family. Type 1 subfamily.

The protein localises to the cytoplasm. It carries out the reaction CMP + ATP = CDP + ADP. The enzyme catalyses dCMP + ATP = dCDP + ADP. The chain is Cytidylate kinase from Shewanella frigidimarina (strain NCIMB 400).